A 326-amino-acid chain; its full sequence is Pyruvate dehydrogenase E1 component subunit beta (326 aa).

E62 is a thiamine diphosphate binding site.

Heterodimer of an alpha and a beta chain. Requires thiamine diphosphate as cofactor.

It carries out the reaction N(6)-[(R)-lipoyl]-L-lysyl-[protein] + pyruvate + H(+) = N(6)-[(R)-S(8)-acetyldihydrolipoyl]-L-lysyl-[protein] + CO2. Functionally, the pyruvate dehydrogenase complex catalyzes the overall conversion of pyruvate to acetyl-CoA and CO(2). It contains multiple copies of three enzymatic components: pyruvate dehydrogenase (E1), dihydrolipoamide acetyltransferase (E2) and lipoamide dehydrogenase (E3). This Mycoplasma genitalium (strain ATCC 33530 / DSM 19775 / NCTC 10195 / G37) (Mycoplasmoides genitalium) protein is Pyruvate dehydrogenase E1 component subunit beta (pdhB).